We begin with the raw amino-acid sequence, 432 residues long: D-amino acid dehydrogenase (432 aa).

3–17 (VVILGSGVVGVASAW) lines the FAD pocket.

It belongs to the DadA oxidoreductase family. FAD serves as cofactor.

It catalyses the reaction a D-alpha-amino acid + A + H2O = a 2-oxocarboxylate + AH2 + NH4(+). It functions in the pathway amino-acid degradation; D-alanine degradation; NH(3) and pyruvate from D-alanine: step 1/1. In terms of biological role, oxidative deamination of D-amino acids. This chain is D-amino acid dehydrogenase, found in Escherichia coli O127:H6 (strain E2348/69 / EPEC).